Consider the following 1014-residue polypeptide: Regulator of telomere elongation helicase 1 homolog (1014 aa).

A Helicase ATP-binding domain is found at 7–324 (AGIPVHFPFE…KEMLLELEKA (318 aa)). Residue 42-49 (SPTGTGKT) participates in ATP binding. Residues Cys147, Cys165, Cys174, and Cys210 each contribute to the [4Fe-4S] cluster site. A DEAH box motif is present at residues 253-256 (DEAH). Position 873 is a phosphothreonine (Thr873). Residues 891-917 (TDMVKTEPGTSNSCSYGNTSSSGSDSR) are disordered. The span at 899–917 (GTSNSCSYGNTSSSGSDSR) shows a compositional bias: low complexity.

The protein belongs to the helicase family. RAD3/XPD subfamily.

It localises to the nucleus. It carries out the reaction ATP + H2O = ADP + phosphate + H(+). A probable ATP-dependent DNA helicase implicated in DNA repair and the maintenance of genomic stability. Acts as an anti-recombinase to counteract toxic recombination and limit crossover during meiosis. Regulates meiotic recombination and crossover homeostasis by physically dissociating strand invasion events and thereby promotes noncrossover repair by meiotic synthesis dependent strand annealing (SDSA) as well as disassembly of D loop recombination intermediates. This chain is Regulator of telomere elongation helicase 1 homolog, found in Drosophila mojavensis (Fruit fly).